Consider the following 436-residue polypeptide: Adenylosuccinate synthetase (436 aa).

GTP-binding positions include 12–18 and 40–42; these read GDEGKGK and GHT. Asp13 (proton acceptor) is an active-site residue. Asp13 and Gly40 together coordinate Mg(2+). IMP contacts are provided by residues 13-16, 38-41, Thr128, Arg142, Gln223, Thr238, and Arg302; these read DEGK and NAGH. The Proton donor role is filled by His41. Substrate is bound at residue 298–304; that stretch reads TTTGRRR. Residues Arg304, 330-332, and 412-414 each bind GTP; these read KLD and SLG.

The protein belongs to the adenylosuccinate synthetase family. Homodimer. Mg(2+) serves as cofactor.

It localises to the cytoplasm. The enzyme catalyses IMP + L-aspartate + GTP = N(6)-(1,2-dicarboxyethyl)-AMP + GDP + phosphate + 2 H(+). The protein operates within purine metabolism; AMP biosynthesis via de novo pathway; AMP from IMP: step 1/2. Its function is as follows. Plays an important role in the de novo pathway of purine nucleotide biosynthesis. Catalyzes the first committed step in the biosynthesis of AMP from IMP. The chain is Adenylosuccinate synthetase from Prochlorococcus marinus (strain MIT 9515).